Reading from the N-terminus, the 526-residue chain is Peptide chain release factor 3 (526 aa).

The 269-residue stretch at 9 to 277 (DKRRTFAIIS…GIVEWAPRPQ (269 aa)) folds into the tr-type G domain. GTP contacts are provided by residues 18–25 (SHPDAGKT), 86–90 (DTPGH), and 140–143 (NKLD).

Belongs to the TRAFAC class translation factor GTPase superfamily. Classic translation factor GTPase family. PrfC subfamily.

Its subcellular location is the cytoplasm. Its function is as follows. Increases the formation of ribosomal termination complexes and stimulates activities of RF-1 and RF-2. It binds guanine nucleotides and has strong preference for UGA stop codons. It may interact directly with the ribosome. The stimulation of RF-1 and RF-2 is significantly reduced by GTP and GDP, but not by GMP. The polypeptide is Peptide chain release factor 3 (Shewanella loihica (strain ATCC BAA-1088 / PV-4)).